A 552-amino-acid polypeptide reads, in one-letter code: Arginine--tRNA ligase (552 aa).

The short motif at 124-134 (GNPTGPLHLAH) is the 'HIGH' region element.

This sequence belongs to the class-I aminoacyl-tRNA synthetase family. Monomer.

It is found in the cytoplasm. The enzyme catalyses tRNA(Arg) + L-arginine + ATP = L-arginyl-tRNA(Arg) + AMP + diphosphate. In Tropheryma whipplei (strain Twist) (Whipple's bacillus), this protein is Arginine--tRNA ligase.